The chain runs to 374 residues: GDSL esterase/lipase 1 (374 aa).

The N-terminal stretch at 1 to 25 (MENSQLVSITFLAYTIIISIGSINC) is a signal peptide. A glycan (N-linked (GlcNAc...) asparagine) is linked at Asn34. Residue Ser44 is the Nucleophile of the active site. 3 N-linked (GlcNAc...) asparagine glycosylation sites follow: Asn184, Asn203, and Asn330. Active-site charge relay system residues include Asp338 and His341. Asn360 carries an N-linked (GlcNAc...) asparagine glycan.

The protein belongs to the 'GDSL' lipolytic enzyme family.

The protein resides in the secreted. In terms of biological role, confers resistance to the necrotrophic fungus Alternaria brassicicola. Possesses lipase and antimicrobial activities that directly disrupt fungal spore integrity. Triggers systemic resistance, mostly by the ethylene-dependent pathway. This is GDSL esterase/lipase 1 from Arabidopsis thaliana (Mouse-ear cress).